Here is a 128-residue protein sequence, read N- to C-terminus: Large ribosomal subunit protein bL17 (128 aa).

The protein belongs to the bacterial ribosomal protein bL17 family. As to quaternary structure, part of the 50S ribosomal subunit. Contacts protein L32.

This chain is Large ribosomal subunit protein bL17, found in Streptococcus mutans serotype c (strain ATCC 700610 / UA159).